Here is a 188-residue protein sequence, read N- to C-terminus: Protein CRIPTO3 (188 aa).

Residues 78-107 (LNRTCCLNGGTCMLESFCACPPSFYGRNCE) form the EGF-like domain. N79 carries an N-linked (GlcNAc...) asparagine glycan. Cystine bridges form between C82-C89, C83-C95, C97-C106, C115-C133, C128-C149, and C131-C140.

The protein belongs to the EGF-CFC (Cripto-1/FRL1/Cryptic) family. Expressed weakly in lung, colon and breast. Expressed also strongly in primary cancer tissues; lung and colon cancers.

It localises to the cell membrane. In terms of biological role, could play a role in the determination of the epiblastic cells that subsequently give rise to the mesoderm. Activates the Nodal-dependent signaling pathway. In Homo sapiens (Human), this protein is Protein CRIPTO3.